The following is a 244-amino-acid chain: 14-3-3 protein beta/alpha-B (244 aa).

The residue at position 1 (Met-1) is an N-acetylmethionine.

This sequence belongs to the 14-3-3 family. Homodimer, and heterodimer with other family members.

It localises to the cytoplasm. In terms of biological role, adapter protein implicated in the regulation of a large spectrum of both general and specialized signaling pathways. Binds to a large number of partners, usually by recognition of a phosphoserine or phosphothreonine motif. Binding generally results in the modulation of the activity of the binding partner. In Xenopus laevis (African clawed frog), this protein is 14-3-3 protein beta/alpha-B (ywhab-b).